The following is a 239-amino-acid chain: 1-(5-phosphoribosyl)-5-[(5-phosphoribosylamino)methylideneamino] imidazole-4-carboxamide isomerase (239 aa).

The Proton acceptor role is filled by aspartate 8. Catalysis depends on aspartate 129, which acts as the Proton donor.

Belongs to the HisA/HisF family.

The protein resides in the cytoplasm. The catalysed reaction is 1-(5-phospho-beta-D-ribosyl)-5-[(5-phospho-beta-D-ribosylamino)methylideneamino]imidazole-4-carboxamide = 5-[(5-phospho-1-deoxy-D-ribulos-1-ylimino)methylamino]-1-(5-phospho-beta-D-ribosyl)imidazole-4-carboxamide. It participates in amino-acid biosynthesis; L-histidine biosynthesis; L-histidine from 5-phospho-alpha-D-ribose 1-diphosphate: step 4/9. The polypeptide is 1-(5-phosphoribosyl)-5-[(5-phosphoribosylamino)methylideneamino] imidazole-4-carboxamide isomerase (Bacillus cereus (strain ATCC 10987 / NRS 248)).